The sequence spans 299 residues: dTDP-4-dehydrorhamnose reductase (299 aa).

NADH contacts are provided by residues 10–12 (GQV), Asp-30, 39–40 (DF), and 63–65 (AHT). NADPH is bound at residue 11–12 (QV). Residues 39-40 (DF), 63-65 (AHT), and Tyr-102 each bind NADPH. 104–105 (TD) lines the dTDP-beta-L-rhamnose pocket. Positions 128 and 132 each coordinate NADH. The NADPH site is built by Tyr-128 and Lys-132. The Proton donor/acceptor role is filled by Tyr-128. Residue Trp-153 participates in dTDP-beta-L-rhamnose binding.

This sequence belongs to the dTDP-4-dehydrorhamnose reductase family. Homodimer. Requires Mg(2+) as cofactor.

The enzyme catalyses dTDP-beta-L-rhamnose + NADP(+) = dTDP-4-dehydro-beta-L-rhamnose + NADPH + H(+). Its pathway is carbohydrate biosynthesis; dTDP-L-rhamnose biosynthesis. It functions in the pathway bacterial outer membrane biogenesis; LPS O-antigen biosynthesis. Functionally, involved in the biosynthesis of the dTDP-L-rhamnose which is an important component of lipopolysaccharide (LPS). Catalyzes the reduction of dTDP-6-deoxy-L-lyxo-4-hexulose to yield dTDP-L-rhamnose. RmlD uses NADH and NADPH nearly equally well. The protein is dTDP-4-dehydrorhamnose reductase of Shigella flexneri.